Here is a 338-residue protein sequence, read N- to C-terminus: DNA-directed RNA polymerase subunit alpha (338 aa).

Positions 1–226 (MLIAQRPTLT…ELFGLARELN (226 aa)) are alpha N-terminal domain (alpha-NTD). Residues 243-338 (LAADLALPIE…DADYADEQYN (96 aa)) are alpha C-terminal domain (alpha-CTD).

It belongs to the RNA polymerase alpha chain family. Homodimer. The RNAP catalytic core consists of 2 alpha, 1 beta, 1 beta' and 1 omega subunit. When a sigma factor is associated with the core the holoenzyme is formed, which can initiate transcription.

It carries out the reaction RNA(n) + a ribonucleoside 5'-triphosphate = RNA(n+1) + diphosphate. Its function is as follows. DNA-dependent RNA polymerase catalyzes the transcription of DNA into RNA using the four ribonucleoside triphosphates as substrates. This chain is DNA-directed RNA polymerase subunit alpha, found in Beutenbergia cavernae (strain ATCC BAA-8 / DSM 12333 / CCUG 43141 / JCM 11478 / NBRC 16432 / NCIMB 13614 / HKI 0122).